A 195-amino-acid chain; its full sequence is MAFVLSLLMALVLASYSPGGSLGCDLSQNHVLLGRQNLKLLGQMTRLSPRFCLQDRKDFGLPQEMVEGGQLQKDQAISVLHEMLQQCFNLFHTERSSAAWDTTLLEQLRTGLHQQLDDLDACLGQVMGKEDSDLRRMGPTLTVKKYFQGIHVYLQEKEYSDCAWEIVQVEMMRALSSISRLQKRLRKMGGDLNSP.

The N-terminal stretch at 1 to 23 is a signal peptide; sequence MAFVLSLLMALVLASYSPGGSLG. 2 disulfide bridges follow: Cys24–Cys122 and Cys52–Cys162.

The protein belongs to the alpha/beta interferon family. IFN-alphaII subfamily. Constitutively and exclusively expressed in the mononuclear cells of the extraembryonic trophectoderm.

The protein localises to the secreted. In terms of biological role, paracrine hormone primarily responsible for maternal recognition of pregnancy. Interacts with endometrial receptors, probably type I interferon receptors, and blocks estrogen receptor expression, preventing the estrogen-induced increase in oxytocin receptor expression in the endometrium. This results in the suppression of the pulsatile endometrial release of the luteolytic hormone prostaglandin F2-alpha, hindering the regression of the corpus luteum (luteolysis) and therefore a return to ovarian cyclicity. This, and a possible direct effect of IFN-tau on prostaglandin synthesis, leads in turn to continued ovarian progesterone secretion, which stimulates the secretion by the endometrium of the nutrients required for the growth of the conceptus. In summary, displays particularly high antiviral and antiproliferative potency concurrently with particular weak cytotoxicity, high antiluteolytic activity and immunomodulatory properties. In contrast with other IFNs, IFN-tau is not virally inducible. The polypeptide is Interferon tau (IFNT) (Cervus elaphus (Red deer)).